The sequence spans 613 residues: ATP-dependent RNA helicase DeaD (613 aa).

The short motif at 5-33 is the Q motif element; it reads ITFNDLGLPEFILKAVSDLGFETPSPIQQ. Residues 36–207 form the Helicase ATP-binding domain; the sequence is IPHLLNGNDV…KRFMNDPQEV (172 aa). 49–56 serves as a coordination point for ATP; that stretch reads AQTGSGKT. The short motif at 155-158 is the DEAD box element; that stretch reads DEAD. The 148-residue stretch at 231-378 folds into the Helicase C-terminal domain; the sequence is KNEALLRFLE…EVELPNHLVL (148 aa). Disordered stretches follow at residues 434–476 and 552–613; these read ILPP…PQPM and AVKS…RSSF. Composition is skewed to basic and acidic residues over residues 440–469 and 556–613; these read PMEK…ERKG and DNSR…RSSF.

This sequence belongs to the DEAD box helicase family. DeaD/CsdA subfamily.

Its subcellular location is the cytoplasm. It catalyses the reaction ATP + H2O = ADP + phosphate + H(+). Its function is as follows. DEAD-box RNA helicase involved in various cellular processes at low temperature, including ribosome biogenesis, mRNA degradation and translation initiation. In Haemophilus influenzae (strain ATCC 51907 / DSM 11121 / KW20 / Rd), this protein is ATP-dependent RNA helicase DeaD.